The sequence spans 347 residues: Actin-like protein MamK (347 aa).

Residues Lys9, 20 to 21, and Asp76 contribute to the ATP site; that span reads TS. Glu143 serves as a coordination point for Mg(2+). ATP is bound by residues 164 to 166, 218 to 222, and Gly289; these read AGT and KEQFS.

It belongs to the FtsA/MreB family. MamK subfamily. In terms of assembly, forms cytoplasmic filaments. Filaments are parallel (polar) and double-helical. MamK subunits from each of the two strands are juxtaposed, each monomer binds ADP. At cell poles and septa interacts with methyl-accepting chemotaxis protein Amb0944 (MCP10). Forms filaments with MamK-like protein.

The protein localises to the cytoplasm. It localises to the cytoskeleton. It is found in the magnetosome membrane. The enzyme catalyses ATP + H2O = ADP + phosphate + H(+). Its activity is regulated as follows. Filament turnover is promoted by MamJ and/or LimJ which have overlapping function; at least one other protein is required for turnover. MamK filament dynamics are probably required for the assembly or maintenance of the magnetosome chain. Protein with ATPase activity which forms dynamic cytoplasmic filaments (probably with paralog MamK-like) that organize magnetosomes into long chains running parallel to the long axis of the cell. Turnover of MamK filaments is probably promoted by MamK-like, which provides a monomer pool. Forms twisted filaments in the presence of ATP or GTP. Serves to close gaps between magnetosomes in the chain. Interaction with MCP10 is involved in controlling the response to magnetic fields, possibly by controlling flagellar rotation. Expression in E.coli yields a filament in the cell's longitudinal axis; the protein nucleates at several sites and one extremity of the filament is located at the cell pole. In Paramagnetospirillum magneticum (strain ATCC 700264 / AMB-1) (Magnetospirillum magneticum), this protein is Actin-like protein MamK (mamK).